We begin with the raw amino-acid sequence, 312 residues long: Methionyl-tRNA formyltransferase (312 aa).

109–112 (SLLP) serves as a coordination point for (6S)-5,6,7,8-tetrahydrofolate.

Belongs to the Fmt family.

It carries out the reaction L-methionyl-tRNA(fMet) + (6R)-10-formyltetrahydrofolate = N-formyl-L-methionyl-tRNA(fMet) + (6S)-5,6,7,8-tetrahydrofolate + H(+). In terms of biological role, attaches a formyl group to the free amino group of methionyl-tRNA(fMet). The formyl group appears to play a dual role in the initiator identity of N-formylmethionyl-tRNA by promoting its recognition by IF2 and preventing the misappropriation of this tRNA by the elongation apparatus. The protein is Methionyl-tRNA formyltransferase of Anaeromyxobacter sp. (strain K).